A 749-amino-acid polypeptide reads, in one-letter code: RNA-binding protein 5-B (749 aa).

Positions 1–88 (MGSDKRVSRS…YHSDGDYMDH (88 aa)) are disordered. Residues 102–182 (KTIMLRGLPI…KTIAMHYSNP (81 aa)) enclose the RRM 1 domain. The segment at 185-214 (KFEDWLCNKCGLYNFRRRLKCFRCGAAKAE) adopts a RanBP2-type zinc-finger fold. Positions 241-325 (SAIILRNIGP…KTIGVDFAKS (85 aa)) constitute an RRM 2 domain. Disordered regions lie at residues 425–471 (QMYQ…SVPD), 520–558 (PAAD…AQQI), 570–595 (NKQK…ESAA), and 626–680 (TEEE…NSNI). Residues 429–460 (QPGSPTQSGTSTAASTTPASTTSTEEATTPTA) are compositionally biased toward low complexity. 2 stretches are compositionally biased toward basic and acidic residues: residues 585–594 (SRDEERKESA) and 627–648 (EEEK…EKYG). The G-patch domain occupies 677-723 (NSNIGNKMLQAMGWKEGSGLGRKSQGITAPIQAQVRMRGAGLGAKGS).

Belongs to the RBM5/RBM10 family. As to quaternary structure, component of the spliceosome A complex (also known as the prespliceosome). Appears to dissociate from the spliceosome upon formation of the spliceosome B complex (also known as the precatalytic spliceosome), in which the heterotrimeric U4/U6.U5 snRNPs are bound.

It localises to the nucleus. Component of the spliceosome A complex. Regulates alternative splicing of a number of mRNAs. May modulate splice site pairing after recruitment of the U1 and U2 snRNPs to the 5' and 3' splice sites of the intron. In Xenopus laevis (African clawed frog), this protein is RNA-binding protein 5-B (rbm5-b).